Here is a 1040-residue protein sequence, read N- to C-terminus: Isoleucine--tRNA ligase (1040 aa).

The short motif at 47-57 (PYCSGSIHLGT) is the 'HIGH' region element. The 'KMSKS' region signature appears at 605–609 (KMSKS). Lys608 contributes to the ATP binding site.

The protein belongs to the class-I aminoacyl-tRNA synthetase family. IleS type 2 subfamily. In terms of assembly, monomer. Requires Zn(2+) as cofactor.

The protein resides in the cytoplasm. It carries out the reaction tRNA(Ile) + L-isoleucine + ATP = L-isoleucyl-tRNA(Ile) + AMP + diphosphate. In terms of biological role, catalyzes the attachment of isoleucine to tRNA(Ile). As IleRS can inadvertently accommodate and process structurally similar amino acids such as valine, to avoid such errors it has two additional distinct tRNA(Ile)-dependent editing activities. One activity is designated as 'pretransfer' editing and involves the hydrolysis of activated Val-AMP. The other activity is designated 'posttransfer' editing and involves deacylation of mischarged Val-tRNA(Ile). The sequence is that of Isoleucine--tRNA ligase from Methanococcus aeolicus (strain ATCC BAA-1280 / DSM 17508 / OCM 812 / Nankai-3).